The primary structure comprises 149 residues: Gonadotropin subunit beta-2 (149 aa).

Positions Met1–Cys24 are cleaved as a signal peptide. Disulfide bonds link Cys30–Cys78, Cys44–Cys93, Cys47–Cys131, Cys55–Cys109, Cys59–Cys111, and Cys114–Cys121. Asn34 carries an N-linked (GlcNAc...) asparagine glycan.

The protein belongs to the glycoprotein hormones subunit beta family. Heterodimer of an alpha and a beta chain.

The protein localises to the secreted. Functionally, involved in gametogenesis and steroidogenesis. The polypeptide is Gonadotropin subunit beta-2 (cgbb) (Clupea pallasii (Pacific herring)).